Here is a 383-residue protein sequence, read N- to C-terminus: Insulinoma-associated protein 1a (383 aa).

The interval methionine 1–valine 20 is SNAG domain. 2 disordered regions span residues proline 99 to lysine 141 and arginine 229 to glycine 269. A compositionally biased stretch (polar residues) spans glycine 105–arginine 120. Residues lysine 130 to arginine 140 are compositionally biased toward basic residues. Residues tyrosine 209–histidine 231 form a C2H2-type 1 zinc finger. Residues alanine 244–threonine 256 are compositionally biased toward basic and acidic residues. The C2H2-type 2; degenerate zinc-finger motif lies at tyrosine 271–aspartate 295. C2H2-type zinc fingers lie at residues histidine 314–histidine 337 and tyrosine 342–histidine 365.

Belongs to the INSM1 family.

It localises to the nucleus. Its function is as follows. May act as a transcriptional regulator. May play a role in neurogenesis and neuroendocrine cell differentiation during embryonic development. In Danio rerio (Zebrafish), this protein is Insulinoma-associated protein 1a (insm1a).